A 164-amino-acid chain; its full sequence is Low molecular weight phosphotyrosine protein phosphatase 2 (164 aa).

Residue C14 is the Nucleophile of the active site. Residue R20 is part of the active site. D130 (proton donor) is an active-site residue.

It belongs to the low molecular weight phosphotyrosine protein phosphatase family. As to expression, cone cells and primary pigment cells in developing pupal retina.

It is found in the cytoplasm. It carries out the reaction O-phospho-L-tyrosyl-[protein] + H2O = L-tyrosyl-[protein] + phosphate. It catalyses the reaction a phosphate monoester + H2O = an alcohol + phosphate. In terms of biological role, catalyzes the dephosphorylation of tyrosine phosphorylated proteins and low-MW aryl phosphates. Can contribute to the regulation of a variety of developmental processes. In Drosophila melanogaster (Fruit fly), this protein is Low molecular weight phosphotyrosine protein phosphatase 2 (primo-2).